The chain runs to 604 residues: Glucoamylase 1 (604 aa).

Residues Met-1 to Ala-25 form the signal peptide. The adsorption to raw starch stretch occupies residues Ala-26–Gly-115. Residues Ala-26 to Ser-130 enclose the CBM21 domain. Residues Lys-116–Ala-604 form a starch degradation region. An N-linked (GlcNAc...) asparagine glycan is attached at Asn-122. The segment at Tyr-127 to Pro-164 is disordered. A compositionally biased stretch (low complexity) spans Ser-130 to Thr-162. Asn-167, Asn-230, and Asn-236 each carry an N-linked (GlcNAc...) asparagine glycan. Trp-279 provides a ligand contact to substrate. Asp-336 serves as the catalytic Proton acceptor. Glu-339 acts as the Proton donor in catalysis. Asn-564 is a glycosylation site (N-linked (GlcNAc...) asparagine).

The protein belongs to the glycosyl hydrolase 15 family.

It catalyses the reaction Hydrolysis of terminal (1-&gt;4)-linked alpha-D-glucose residues successively from non-reducing ends of the chains with release of beta-D-glucose.. The chain is Glucoamylase 1 from Rhizopus oryzae (Mucormycosis agent).